The sequence spans 391 residues: Histidinol-phosphate aminotransferase (391 aa).

At K248 the chain carries N6-(pyridoxal phosphate)lysine.

The protein belongs to the class-II pyridoxal-phosphate-dependent aminotransferase family. Histidinol-phosphate aminotransferase subfamily. Homodimer. It depends on pyridoxal 5'-phosphate as a cofactor.

It catalyses the reaction L-histidinol phosphate + 2-oxoglutarate = 3-(imidazol-4-yl)-2-oxopropyl phosphate + L-glutamate. The protein operates within amino-acid biosynthesis; L-histidine biosynthesis; L-histidine from 5-phospho-alpha-D-ribose 1-diphosphate: step 7/9. The polypeptide is Histidinol-phosphate aminotransferase (Shewanella oneidensis (strain ATCC 700550 / JCM 31522 / CIP 106686 / LMG 19005 / NCIMB 14063 / MR-1)).